Consider the following 568-residue polypeptide: Probable inactive poly [ADP-ribose] polymerase SRO1 (568 aa).

Residues 1 to 18 (MEAKIVKVSDSSYKDGLG) are compositionally biased toward basic and acidic residues. The segment at 1-32 (MEAKIVKVSDSSYKDGLGKKRKHPGNYTPYDS) is disordered. Residues 77–152 (RYFSYYKKTG…ETGVKTQLAW (76 aa)) form the WWE domain. 2 disordered regions span residues 220–241 (DFQA…DSCS) and 453–500 (ILPT…RRPR). The region spanning 245-463 (DDAVEKWDKT…LPTTQSRHES (219 aa)) is the PARP catalytic domain. The RST domain maps to 497 to 568 (RRPRSPIMPF…TITGLQRSLG (72 aa)).

As to quaternary structure, interacts with DREB2A, DREB2B, DREB2C and NAC082. In terms of tissue distribution, expressed in young developing tissues, such as young leaves and flowers and root tips. In mature plants, expressed in vasculature of leaves and roots.

It is found in the nucleus matrix. Functionally, probable inactive ADP-ribosyltransferase that functions with RCD1 to regulate oxidative stress, hormonal and developmental responses. May regulate some stress-responsive genes. Seems to play a smaller developmental role than R. In Arabidopsis thaliana (Mouse-ear cress), this protein is Probable inactive poly [ADP-ribose] polymerase SRO1 (SRO1).